The sequence spans 131 residues: Histone H2B.2 (131 aa).

Over residues 1–19 the composition is skewed to basic and acidic residues; the sequence is MSAKAEKKPASKAPAEKKP. The interval 1-38 is disordered; the sequence is MSAKAEKKPASKAPAEKKPAAKKTAPSSDGKKRTKARK. An N6-acetyllysine; alternate mark is found at Lys7 and Lys8. Glycyl lysine isopeptide (Lys-Gly) (interchain with G-Cter in SUMO); alternate cross-links involve residues Lys7 and Lys8. Position 11 is a phosphoserine (Ser11). Lys12 is subject to N6-acetyllysine. Residue Lys17 is modified to N6-acetyllysine; alternate. A Glycyl lysine isopeptide (Lys-Gly) (interchain with G-Cter in SUMO); alternate cross-link involves residue Lys17. Lys18 is covalently cross-linked (Glycyl lysine isopeptide (Lys-Gly) (interchain with G-Cter in SUMO)). Lys124 participates in a covalent cross-link: Glycyl lysine isopeptide (Lys-Gly) (interchain with G-Cter in ubiquitin).

The protein belongs to the histone H2B family. The nucleosome is a histone octamer containing two molecules each of H2A, H2B, H3 and H4 assembled in one H3-H4 heterotetramer and two H2A-H2B heterodimers. The octamer wraps approximately 147 bp of DNA. Monoubiquitinated by the UBC2-BRE1 complex to form H2BK123ub1. H2BK123ub1 gives a specific tag for epigenetic transcriptional activation and is also prerequisite for H3K4me and H3K79me formation. H2BK123ub1 also modulates the formation of double-strand breaks during meiosis and is a prerequisite for DNA-damage checkpoint activation. Post-translationally, phosphorylated by STE20 to form H2BS10ph during progression through meiotic prophase. May be correlated with chromosome condensation. In terms of processing, acetylated by GCN5 to form H2BK11ac and H2BK16ac. H2BK16ac can also be formed by ESA1. Acetylation of N-terminal lysines and particularly formation of H2BK11acK16ac has a positive effect on transcription. Sumoylation to form H2BK6su or H2BK7su, and probably also H2BK16su or H2BK17su, occurs preferentially near the telomeres and represses gene transcription.

The protein localises to the nucleus. The protein resides in the chromosome. Functionally, core component of nucleosome. Nucleosomes wrap and compact DNA into chromatin, limiting DNA accessibility to the cellular machineries which require DNA as a template. Histones thereby play a central role in transcription regulation, DNA repair, DNA replication and chromosomal stability. DNA accessibility is regulated via a complex set of post-translational modifications of histones, also called histone code, and nucleosome remodeling. The chain is Histone H2B.2 (HTB2) from Candida glabrata (strain ATCC 2001 / BCRC 20586 / JCM 3761 / NBRC 0622 / NRRL Y-65 / CBS 138) (Yeast).